The chain runs to 185 residues: Ribosome-recycling factor (185 aa).

Positions 145–164 are disordered; sequence DGEAGEDEVSRAEKDLDKTT.

The protein belongs to the RRF family.

It localises to the cytoplasm. In terms of biological role, responsible for the release of ribosomes from messenger RNA at the termination of protein biosynthesis. May increase the efficiency of translation by recycling ribosomes from one round of translation to another. This Mycobacterium sp. (strain JLS) protein is Ribosome-recycling factor.